A 24-amino-acid chain; its full sequence is Bombinin (24 aa).

Residue N24 is modified to Asparagine amide.

It belongs to the bombinin family. As to expression, expressed by the skin glands.

It is found in the secreted. In terms of biological role, has antimicrobial and hemolytic activities. This is Bombinin from Bombina variegata (Yellow-bellied toad).